The primary structure comprises 347 residues: ATPase GET3 (347 aa).

26–33 is a binding site for ATP; sequence KGGVGKTT. Aspartate 57 is a catalytic residue. Glutamate 241 and asparagine 268 together coordinate ATP. Residues cysteine 279 and cysteine 282 each coordinate Zn(2+).

The protein belongs to the arsA ATPase family. In terms of assembly, homodimer. Component of the Golgi to ER traffic (GET) complex, which is composed of GET1, GET2 and GET3. Within the complex, GET1 and GET2 form a heterotetramer which is stabilized by phosphatidylinositol binding and which binds to the GET3 homodimer. Interacts with the chloride channel protein GEF1.

It is found in the cytoplasm. It localises to the endoplasmic reticulum. Its subcellular location is the golgi apparatus. Functionally, ATPase required for the post-translational delivery of tail-anchored (TA) proteins to the endoplasmic reticulum. Recognizes and selectively binds the transmembrane domain of TA proteins in the cytosol. This complex then targets to the endoplasmic reticulum by membrane-bound receptors GET1 and GET2, where the tail-anchored protein is released for insertion. This process is regulated by ATP binding and hydrolysis. ATP binding drives the homodimer towards the closed dimer state, facilitating recognition of newly synthesized TA membrane proteins. ATP hydrolysis is required for insertion. Subsequently, the homodimer reverts towards the open dimer state, lowering its affinity for the GET1-GET2 receptor, and returning it to the cytosol to initiate a new round of targeting. Cooperates with the HDEL receptor ERD2 to mediate the ATP-dependent retrieval of resident ER proteins that contain a C-terminal H-D-E-L retention signal from the Golgi to the ER. Involved in low-level resistance to the oxyanions arsenite and arsenate, and in heat tolerance. The polypeptide is ATPase GET3 (Meyerozyma guilliermondii (strain ATCC 6260 / CBS 566 / DSM 6381 / JCM 1539 / NBRC 10279 / NRRL Y-324) (Yeast)).